The following is a 404-amino-acid chain: LL-diaminopimelate aminotransferase (404 aa).

2 residues coordinate substrate: tyrosine 15 and glycine 42. Pyridoxal 5'-phosphate is bound by residues tyrosine 72, 108-109 (AK), tyrosine 132, asparagine 188, tyrosine 219, and 247-249 (SFS). Residues lysine 109, tyrosine 132, and asparagine 188 each coordinate substrate. Lysine 250 carries the N6-(pyridoxal phosphate)lysine modification. Pyridoxal 5'-phosphate-binding residues include arginine 258 and asparagine 288. Positions 288 and 384 each coordinate substrate.

Belongs to the class-I pyridoxal-phosphate-dependent aminotransferase family. LL-diaminopimelate aminotransferase subfamily. Homodimer. Pyridoxal 5'-phosphate is required as a cofactor.

The catalysed reaction is (2S,6S)-2,6-diaminopimelate + 2-oxoglutarate = (S)-2,3,4,5-tetrahydrodipicolinate + L-glutamate + H2O + H(+). The protein operates within amino-acid biosynthesis; L-lysine biosynthesis via DAP pathway; LL-2,6-diaminopimelate from (S)-tetrahydrodipicolinate (aminotransferase route): step 1/1. Its function is as follows. Involved in the synthesis of meso-diaminopimelate (m-DAP or DL-DAP), required for both lysine and peptidoglycan biosynthesis. Catalyzes the direct conversion of tetrahydrodipicolinate to LL-diaminopimelate. This Agathobacter rectalis (strain ATCC 33656 / DSM 3377 / JCM 17463 / KCTC 5835 / VPI 0990) (Eubacterium rectale) protein is LL-diaminopimelate aminotransferase.